The sequence spans 125 residues: Small ribosomal subunit protein uS12 (125 aa).

Asp-89 bears the 3-methylthioaspartic acid mark.

The protein belongs to the universal ribosomal protein uS12 family. In terms of assembly, part of the 30S ribosomal subunit. Contacts proteins S8 and S17. May interact with IF1 in the 30S initiation complex.

Its function is as follows. With S4 and S5 plays an important role in translational accuracy. In terms of biological role, interacts with and stabilizes bases of the 16S rRNA that are involved in tRNA selection in the A site and with the mRNA backbone. Located at the interface of the 30S and 50S subunits, it traverses the body of the 30S subunit contacting proteins on the other side and probably holding the rRNA structure together. The combined cluster of proteins S8, S12 and S17 appears to hold together the shoulder and platform of the 30S subunit. The chain is Small ribosomal subunit protein uS12 from Clostridium botulinum (strain ATCC 19397 / Type A).